We begin with the raw amino-acid sequence, 309 residues long: D-alanine--D-alanine ligase (309 aa).

The 196-residue stretch at 109–304 (KMVWAACGLP…FTALCLAILE (196 aa)) folds into the ATP-grasp domain. 135 to 190 (VAELGLPIFVKPVHEGSSMGATKVTAASQLKAAWERAARFDDLVLAEEFIVGAELT) contributes to the ATP binding site. Mg(2+) is bound by residues aspartate 258, glutamate 271, and asparagine 273.

The protein belongs to the D-alanine--D-alanine ligase family. Mg(2+) is required as a cofactor. The cofactor is Mn(2+).

It localises to the cytoplasm. It catalyses the reaction 2 D-alanine + ATP = D-alanyl-D-alanine + ADP + phosphate + H(+). It participates in cell wall biogenesis; peptidoglycan biosynthesis. Its function is as follows. Cell wall formation. The chain is D-alanine--D-alanine ligase from Aromatoleum aromaticum (strain DSM 19018 / LMG 30748 / EbN1) (Azoarcus sp. (strain EbN1)).